The sequence spans 906 residues: Probable disease resistance RPP8-like protein 2 (906 aa).

Positions 15–68 form a coiled coil; that stretch reads ELLSRESARLNGIDEQVDGLKRQLGRLQSLLKDADAKKNETERVRNFLEDVKDI. In terms of domain architecture, NB-ARC spans 144–454; sequence LQERQREIRQ…AEGIITPFHD (311 aa). 190–197 contacts ATP; that stretch reads GMGGIGKT. 10 LRR repeats span residues 573–597, 598–621, 623–644, 646–671, 672–696, 704–727, 740–766, 767–790, 791–818, and 840–865; these read LPLL…SIGD, LIHL…LGNL, LLLC…NVLK, MQEL…DLVN, LESL…KLSV, ECTF…SFHD, LLVL…QYRF, PPHL…ILEK, LLHL…GFPQ, and MPCL…KYVT.

It belongs to the disease resistance NB-LRR family. RPP8/HRT subfamily.

Functionally, potential disease resistance protein. The chain is Probable disease resistance RPP8-like protein 2 (RPP8L2) from Arabidopsis thaliana (Mouse-ear cress).